Consider the following 349-residue polypeptide: MIEFDNLTYLHGKPQGTGLLKANPEDFVVVEDLGFEPDGEGEHILVRILKNGCNTRFVADALAKFLKIHAREVSFAGQKDKHAVTEQWLCARVPGKEMPDLSAFQLEGCQVLEYARHKRKLRLGALKGNAFTLVLREVSNRDDVEQRLNDICVKGVPNYFGAQRFGIGGSNLQGAQRWAQTNTPVRDRNKRSFWLSAARSALFNQIVAERLKKADVNQVVDGDALQLAGRGSWFVATTEELAELQRRVNDKELMITAALPGSGEWGTQREALAFEQAAVAAETELQALLVREKVEAARRAMLLYPQQLSWNWWDDVTVEIRFWLPAGSFATSVVRELINTTGDYAHIAE.

Phe-27 lines the substrate pocket. The Nucleophile role is filled by Asp-80. Asn-129 contacts substrate. The TRUD domain occupies 155 to 303; sequence GVPNYFGAQR…VEAARRAMLL (149 aa). Phe-329 serves as a coordination point for substrate.

Belongs to the pseudouridine synthase TruD family.

The enzyme catalyses uridine(13) in tRNA = pseudouridine(13) in tRNA. Its function is as follows. Responsible for synthesis of pseudouridine from uracil-13 in transfer RNAs. This is tRNA pseudouridine synthase D from Escherichia coli O9:H4 (strain HS).